Here is a 126-residue protein sequence, read N- to C-terminus: uncharacterized protein (126 aa).

The chain crosses the membrane as a helical span at residues 55 to 77; sequence MLLINSNLVLSGLLLFIDVYRAA.

It is found in the membrane. This is an uncharacterized protein from Dictyostelium discoideum (Social amoeba).